The following is a 798-amino-acid chain: Penicillin-binding protein 1A (798 aa).

Residues 1-9 are Cytoplasmic-facing; it reads MIKKILTTC. Residues 10–30 form a helical; Signal-anchor for type II membrane protein membrane-spanning segment; that stretch reads FGLVFGFCVFGVGLVAIAILV. Topologically, residues 31–798 are periplasmic; it reads TYPKLPSLDS…SKQQQLDSLF (768 aa). Residues 50 to 218 form a transglycosylase region; sequence LTIYSADGEV…SAYNPIVNPE (169 aa). The active-site Proton donor; for transglycosylase activity is Glu88. The interval 378 to 700 is transpeptidase; it reads RRALGFAARA…GTIAVPVWVD (323 aa). The active-site Acyl-ester intermediate; for transpeptidase activity is the Ser461. The segment at 738 to 798 is disordered; the sequence is GLTLDNSGIA…SKQQQLDSLF (61 aa). Residues 768-777 show a composition bias toward basic and acidic residues; that stretch reads AADDEVRQDM. A compositionally biased stretch (polar residues) spans 783–798; the sequence is LPSNTGSKQQQLDSLF.

It in the N-terminal section; belongs to the glycosyltransferase 51 family. In the C-terminal section; belongs to the transpeptidase family.

It is found in the cell inner membrane. The enzyme catalyses [GlcNAc-(1-&gt;4)-Mur2Ac(oyl-L-Ala-gamma-D-Glu-L-Lys-D-Ala-D-Ala)](n)-di-trans,octa-cis-undecaprenyl diphosphate + beta-D-GlcNAc-(1-&gt;4)-Mur2Ac(oyl-L-Ala-gamma-D-Glu-L-Lys-D-Ala-D-Ala)-di-trans,octa-cis-undecaprenyl diphosphate = [GlcNAc-(1-&gt;4)-Mur2Ac(oyl-L-Ala-gamma-D-Glu-L-Lys-D-Ala-D-Ala)](n+1)-di-trans,octa-cis-undecaprenyl diphosphate + di-trans,octa-cis-undecaprenyl diphosphate + H(+). It carries out the reaction Preferential cleavage: (Ac)2-L-Lys-D-Ala-|-D-Ala. Also transpeptidation of peptidyl-alanyl moieties that are N-acyl substituents of D-alanine.. The protein operates within cell wall biogenesis; peptidoglycan biosynthesis. Its function is as follows. Cell wall formation. Synthesis of cross-linked peptidoglycan from the lipid intermediates. The enzyme has a penicillin-insensitive transglycosylase N-terminal domain (formation of linear glycan strands) and a penicillin-sensitive transpeptidase C-terminal domain (cross-linking of the peptide subunits). In Neisseria meningitidis serogroup A / serotype 4A (strain DSM 15465 / Z2491), this protein is Penicillin-binding protein 1A (mrcA).